Reading from the N-terminus, the 330-residue chain is Lipoyl synthase (330 aa).

The [4Fe-4S] cluster site is built by cysteine 77, cysteine 82, cysteine 88, cysteine 103, cysteine 107, cysteine 110, and serine 317. Positions 89–306 constitute a Radical SAM core domain; sequence FNHGTATFMI…RSEAERMGFE (218 aa).

This sequence belongs to the radical SAM superfamily. Lipoyl synthase family. Requires [4Fe-4S] cluster as cofactor.

The protein resides in the cytoplasm. The enzyme catalyses [[Fe-S] cluster scaffold protein carrying a second [4Fe-4S](2+) cluster] + N(6)-octanoyl-L-lysyl-[protein] + 2 oxidized [2Fe-2S]-[ferredoxin] + 2 S-adenosyl-L-methionine + 4 H(+) = [[Fe-S] cluster scaffold protein] + N(6)-[(R)-dihydrolipoyl]-L-lysyl-[protein] + 4 Fe(3+) + 2 hydrogen sulfide + 2 5'-deoxyadenosine + 2 L-methionine + 2 reduced [2Fe-2S]-[ferredoxin]. It functions in the pathway protein modification; protein lipoylation via endogenous pathway; protein N(6)-(lipoyl)lysine from octanoyl-[acyl-carrier-protein]: step 2/2. Catalyzes the radical-mediated insertion of two sulfur atoms into the C-6 and C-8 positions of the octanoyl moiety bound to the lipoyl domains of lipoate-dependent enzymes, thereby converting the octanoylated domains into lipoylated derivatives. This chain is Lipoyl synthase, found in Actinobacillus pleuropneumoniae serotype 5b (strain L20).